The sequence spans 988 residues: Exportin-T (988 aa).

Belongs to the exportin family. In terms of tissue distribution, expressed in young leaves, growing leaf blades, young floral organs and root tips.

The protein localises to the nucleus. It is found in the cytoplasm. In terms of biological role, probable tRNA nucleus export receptor which regulates tRNA processing and facilitates tRNA translocation across the nuclear pore complex. Is required for proper activity of the shoot apical meristem (SAM) and correct leaf initiation at different developmental stages, and may play a role in floral patterning. The chain is Exportin-T (PSD) from Arabidopsis thaliana (Mouse-ear cress).